We begin with the raw amino-acid sequence, 1456 residues long: Ig-like and fibronectin type-III domain-containing protein C27B7.7 (1456 aa).

The N-terminal stretch at 1-16 (MISLSLVLLLLFGVRC) is a signal peptide. Fibronectin type-III domains are found at residues 24–128 (NDDS…SINT) and 132–227 (IPKA…TNST). Residues N64, N146, N164, N198, and N225 are each glycosylated (N-linked (GlcNAc...) asparagine). In terms of domain architecture, Ig-like 1 spans 236–322 (PDEEYTADPQ…DAGDSSKEVN (87 aa)). C254 and C308 form a disulfide bridge. Residues 328 to 426 (PGSPPSEITL…VAMERDTQPI (99 aa)) enclose the Fibronectin type-III 3 domain. N-linked (GlcNAc...) asparagine glycosylation is found at N471, N497, and N517. Fibronectin type-III domains are found at residues 531–631 (APTQ…TLNG), 636–736 (PPDN…TAYS), and 737–846 (EVPI…WFRT). N-linked (GlcNAc...) asparagine glycosylation is found at N658, N691, and N692. An Ig-like 2 domain is found at 841–948 (PRWFRTGHGK…GSSSASVEIR (108 aa)). C877 and C932 form a disulfide bridge. 14 N-linked (GlcNAc...) asparagine glycosylation sites follow: N893, N898, N969, N1091, N1120, N1133, N1151, N1207, N1268, N1277, N1298, N1350, N1357, and N1382. The region spanning 955–1050 (PPENIILTAY…SCISDVLYET (96 aa)) is the Fibronectin type-III 7 domain. Fibronectin type-III domains lie at 1148–1234 (APTN…TPNG), 1236–1343 (PKTA…ISFD), and 1347–1438 (VIDN…SSPS). A disordered region spans residues 1419–1456 (LGRESPPSEEIDLEFISSPSPTPIISGSRRKVIKEPPL). Positions 1434-1445 (ISSPSPTPIISG) are enriched in low complexity.

The protein localises to the secreted. This is Ig-like and fibronectin type-III domain-containing protein C27B7.7 from Caenorhabditis elegans.